The sequence spans 189 residues: UPF0312 protein VV2_0231 (189 aa).

An N-terminal signal peptide occupies residues 1-22; it reads MRKSVIATGLALMMAVPFAANA.

Belongs to the UPF0312 family. Type 1 subfamily.

It is found in the periplasm. The protein is UPF0312 protein VV2_0231 of Vibrio vulnificus (strain CMCP6).